Consider the following 220-residue polypeptide: Glycerol-3-phosphate acyltransferase (220 aa).

5 helical membrane passes run 4-24, 53-73, 80-100, 116-136, and 138-158; these read LTIL…AVLV, VAAL…VYLA, PVYL…PIFF, MPIG…VLLV, and GYSS…TYLI. A disordered region spans residues 193–220; the sequence is WGRQAQRRQEEVGEMDDVAQKRDERDKK. Positions 210-220 are enriched in basic and acidic residues; sequence VAQKRDERDKK.

The protein belongs to the PlsY family. As to quaternary structure, probably interacts with PlsX.

It localises to the cell inner membrane. The catalysed reaction is an acyl phosphate + sn-glycerol 3-phosphate = a 1-acyl-sn-glycero-3-phosphate + phosphate. Its pathway is lipid metabolism; phospholipid metabolism. In terms of biological role, catalyzes the transfer of an acyl group from acyl-phosphate (acyl-PO(4)) to glycerol-3-phosphate (G3P) to form lysophosphatidic acid (LPA). This enzyme utilizes acyl-phosphate as fatty acyl donor, but not acyl-CoA or acyl-ACP. This Aeromonas salmonicida (strain A449) protein is Glycerol-3-phosphate acyltransferase.